The chain runs to 387 residues: Galactokinase (387 aa).

33–36 (EHID) contributes to the substrate binding site. ATP contacts are provided by residues Ser-67 and 124-130 (GAGLSSS). Mg(2+) contacts are provided by Ser-130 and Glu-162. Catalysis depends on Asp-174, which acts as the Proton acceptor. Tyr-224 contacts substrate.

The protein belongs to the GHMP kinase family. GalK subfamily.

It localises to the cytoplasm. It catalyses the reaction alpha-D-galactose + ATP = alpha-D-galactose 1-phosphate + ADP + H(+). The protein operates within carbohydrate metabolism; galactose metabolism. Functionally, catalyzes the transfer of the gamma-phosphate of ATP to D-galactose to form alpha-D-galactose-1-phosphate (Gal-1-P). The polypeptide is Galactokinase (Clostridium perfringens (strain 13 / Type A)).